The following is a 444-amino-acid chain: Enolase (444 aa).

Substrate contacts are provided by His163 and Glu172. The Proton donor role is filled by Glu215. Mg(2+)-binding residues include Asp250, Glu300, and Asp327. Substrate contacts are provided by Glu300 and Asp327. The active-site Proton acceptor is the Lys352. Substrate-binding positions include 379-382 (SHRS) and Lys403.

It belongs to the enolase family. As to quaternary structure, homodimer. Mg(2+) serves as cofactor.

The protein localises to the cytoplasm. It carries out the reaction (2R)-2-phosphoglycerate = phosphoenolpyruvate + H2O. It functions in the pathway carbohydrate degradation; glycolysis; pyruvate from D-glyceraldehyde 3-phosphate: step 4/5. The sequence is that of Enolase (PGH1) from Mesembryanthemum crystallinum (Common ice plant).